The chain runs to 158 residues: U-limacoditoxin(8)-Dv66 (158 aa).

The first 24 residues, 1–24, serve as a signal peptide directing secretion; it reads MALRAPWIALCCVLAVLFVVPAAT. The propeptide occupies 25–32; the sequence is RDEERQKR. 2 consecutive repeat copies span residues 33 to 78 and 79 to 124. The tract at residues 33-158 is 3 X 46 AA tandem repeats; that stretch reads GVDFGLQRGF…AQDPHGPGRK (126 aa). P63 is subject to Proline amide. A propeptide spanning residues 64-78 is cleaved from the precursor; sequence GRKRRDAYEMERQKR. Residues 101 to 120 are disordered; the sequence is ARAQDPHGPGRKRRDAYEME. P109 is modified (proline amide). Residues 110–124 constitute a propeptide that is removed on maturation; the sequence is GRKRRDAYEMERQKR. Residues 125-158 form a 3; half-length repeat; sequence GVDFGLQRGFSGSELAKLKLALARAQDPHGPGRK. Position 155 is a proline amide (P155).

It belongs to the diuretic hormone class 2 family. Expressed by the venom secretory cell of the spine. The spine is a cuticular structure containing a single large nucleated venom-secreting cell at its base. It is an independent unit capable of producing, storing and injecting venom. On the back of D.vulnerans caterpillars, spines are grouped together by 50 to 100 to form scoli, of which there are eight in D.vulnerans.

The protein resides in the secreted. Functionally, probable toxin. Does not show insecticidal, antimicrobial and antiparasitic activities. Does not induce increase in intracellular calcium in mouse DRG neurons, suggesting that it does not induce pain. In Doratifera vulnerans (Mottled cup moth), this protein is U-limacoditoxin(8)-Dv66.